A 467-amino-acid chain; its full sequence is Ribosomal RNA small subunit methyltransferase F (467 aa).

S-adenosyl-L-methionine-binding positions include 119-125, Glu-143, Asp-170, and Asp-188; that span reads ASAPGSK. The Nucleophile role is filled by Cys-241.

Belongs to the class I-like SAM-binding methyltransferase superfamily. RsmB/NOP family.

The protein resides in the cytoplasm. The enzyme catalyses cytidine(1407) in 16S rRNA + S-adenosyl-L-methionine = 5-methylcytidine(1407) in 16S rRNA + S-adenosyl-L-homocysteine + H(+). Specifically methylates the cytosine at position 1407 (m5C1407) of 16S rRNA. The sequence is that of Ribosomal RNA small subunit methyltransferase F from Shewanella amazonensis (strain ATCC BAA-1098 / SB2B).